A 392-amino-acid chain; its full sequence is Fasciculation and elongation protein zeta-1 (392 aa).

A disordered region spans residues 1 to 37 (MEAPLVSLDEEFEDLRPSCSEDPEEKPQCFYGSSPHH). Ser58 is subject to Phosphoserine. The tract at residues 175–198 (MQNSPDPEEEEEVLEEEDGGETSS) is disordered. The segment covering 180 to 194 (DPEEEEEVLEEEDGG) has biased composition (acidic residues). The stretch at 230–298 (SELTELLDQV…KKRRKEKGLS (69 aa)) forms a coiled coil. Phosphoserine is present on residues Ser298 and Ser316.

It belongs to the zygin family. In terms of assembly, homodimer; disulfide-linked. May form heterodimers with FEZ2. Interacts with the NH2-terminal variable region (V1) of PKC zeta and weakly with that of PKC epsilon. Interacts with UBE4B. Interacts with SAP30L. Interacts with SCOC and ULK1; SCOC interferes with ULK1-binding to FEZ1. Directly interacts with SCOC and UVRAG. Stabilizes the interaction between SCOC and UVRAG during amino acid starvation. Phosphorylated by protein kinase C zeta; which enhances interaction with UBE4B and polyubiquitination. In terms of processing, polyubiquitinated in a UBE4B-dependent manner; which does not lead to proteasomal degradation and may be important for neurogenic activity. Polyubiquitin linkage seems to be mainly through Lys-26. In terms of tissue distribution, mainly expressed in brain.

The protein resides in the cytoplasm. It localises to the cytoskeleton. It is found in the microtubule organizing center. The protein localises to the centrosome. Its subcellular location is the cell membrane. In terms of biological role, may be involved in axonal outgrowth as component of the network of molecules that regulate cellular morphology and axon guidance machinery. Able to restore partial locomotion and axonal fasciculation to C.elegans unc-76 mutants in germline transformation experiments. May participate in the transport of mitochondria and other cargos along microtubules. This is Fasciculation and elongation protein zeta-1 (FEZ1) from Homo sapiens (Human).